A 174-amino-acid chain; its full sequence is ATP-dependent protease subunit HslV (174 aa).

Residue T2 is part of the active site. Positions 157, 160, and 163 each coordinate Na(+).

This sequence belongs to the peptidase T1B family. HslV subfamily. In terms of assembly, a double ring-shaped homohexamer of HslV is capped on each side by a ring-shaped HslU homohexamer. The assembly of the HslU/HslV complex is dependent on binding of ATP.

It is found in the cytoplasm. The catalysed reaction is ATP-dependent cleavage of peptide bonds with broad specificity.. Its activity is regulated as follows. Allosterically activated by HslU binding. Functionally, protease subunit of a proteasome-like degradation complex believed to be a general protein degrading machinery. The sequence is that of ATP-dependent protease subunit HslV from Yersinia pseudotuberculosis serotype I (strain IP32953).